Here is a 283-residue protein sequence, read N- to C-terminus: Short-chain dehydrogenase anuB (283 aa).

T57, D78, N106, Y166, K170, V199, and T201 together coordinate NADP(+). Residue Y166 is the Proton acceptor of the active site. The Proton donor role is filled by Y166. K170 serves as the catalytic Lowers pKa of active site Tyr.

Belongs to the short-chain dehydrogenases/reductases (SDR) family.

It participates in secondary metabolite biosynthesis. Functionally, highly reducing polyketide synthase; part of the gene cluster that mediates the biosynthesis of annullatin D, an alkylated aromatic polyketide with a fused dihydrobenzofuran lactone ring system that exhibits potent agonistic activities toward the cannabinoid receptors. The annullatin backbone 2-hydroxymethyl-3-pentylphenol is assembled from one acetyl-CoA starter unit and 5 malonyl-CoA elongation units by cooperation of the highly reducing polyketide synthase anuA, the short-chain dehydrogenase anuB and the oxidoreductase anuC, before being hydroxylated at the C-5 alkyl chain by the cytochrome P450 monooxygenase anuE to form (8S)-annullatin E. The prenyltransferase anuH subsequently installs one isoprenyl group at the benzene ring to form (8S)-annullatin J. Enzymatic or nonenzymatic dihydro-benzofuran ring formation between the prenyl and the phenolic hydroxyl groups in (8S)-annullatin J results in two diastereomers (2S,9S)-annullatin H and compound 12. The intermediate (2S,9S)-annullatin H is then converted to (2S,9S)-annullatin D by the FAD-linked oxidoreductase anuG-catalyzed five-member lactone ring formation. The isomer 12 acts as a substrate for the short-chain dehydrogenase anuF and is oxidized to (2R)-annullatin F, which is subsequently acetylated by an acetyltransferase leading to (2R)-annullatin G formation. The remaining enzymes identified within the cluster, anuD, anuI and anuJ, seem not to be involved in annullatin biosynthesis. In Penicillium roqueforti (strain FM164), this protein is Short-chain dehydrogenase anuB.